Consider the following 121-residue polypeptide: UPF0102 protein Syncc9902_1284 (121 aa).

This sequence belongs to the UPF0102 family.

This Synechococcus sp. (strain CC9902) protein is UPF0102 protein Syncc9902_1284.